The following is a 128-amino-acid chain: Large ribosomal subunit protein eL31 (128 aa).

This sequence belongs to the eukaryotic ribosomal protein eL31 family.

The chain is Large ribosomal subunit protein eL31 (RpL31) from Drosophila virilis (Fruit fly).